A 102-amino-acid chain; its full sequence is NADH-quinone oxidoreductase subunit K 2 (102 aa).

Transmembrane regions (helical) follow at residues 5-25 (FEHV…CVLV), 30-50 (LIML…AFVG), and 65-85 (LIIM…VVYL).

It belongs to the complex I subunit 4L family. In terms of assembly, NDH-1 is composed of 14 different subunits. Subunits NuoA, H, J, K, L, M, N constitute the membrane sector of the complex.

The protein localises to the cell inner membrane. It catalyses the reaction a quinone + NADH + 5 H(+)(in) = a quinol + NAD(+) + 4 H(+)(out). Functionally, NDH-1 shuttles electrons from NADH, via FMN and iron-sulfur (Fe-S) centers, to quinones in the respiratory chain. The immediate electron acceptor for the enzyme in this species is believed to be ubiquinone. Couples the redox reaction to proton translocation (for every two electrons transferred, four hydrogen ions are translocated across the cytoplasmic membrane), and thus conserves the redox energy in a proton gradient. This chain is NADH-quinone oxidoreductase subunit K 2, found in Geobacter sulfurreducens (strain ATCC 51573 / DSM 12127 / PCA).